Here is a 204-residue protein sequence, read N- to C-terminus: Small ribosomal subunit protein uS3 (204 aa).

One can recognise a KH type-2 domain in the interval 37–105 (IRSYINESFK…NVEVNVVGVK (69 aa)).

The protein belongs to the universal ribosomal protein uS3 family. As to quaternary structure, part of the 30S ribosomal subunit. Forms a tight complex with proteins S10 and S14.

In terms of biological role, binds the lower part of the 30S subunit head. Binds mRNA in the 70S ribosome, positioning it for translation. This chain is Small ribosomal subunit protein uS3, found in Wolbachia pipientis wMel.